We begin with the raw amino-acid sequence, 388 residues long: Chorismate synthase (388 aa).

NADP(+)-binding residues include R39 and R45. Residues 132 to 134, 251 to 252, G296, 311 to 315, and R337 contribute to the FMN site; these read RSS, NA, and KPIPT.

It belongs to the chorismate synthase family. In terms of assembly, homotetramer. FMNH2 serves as cofactor.

The enzyme catalyses 5-O-(1-carboxyvinyl)-3-phosphoshikimate = chorismate + phosphate. The protein operates within metabolic intermediate biosynthesis; chorismate biosynthesis; chorismate from D-erythrose 4-phosphate and phosphoenolpyruvate: step 7/7. In terms of biological role, catalyzes the anti-1,4-elimination of the C-3 phosphate and the C-6 proR hydrogen from 5-enolpyruvylshikimate-3-phosphate (EPSP) to yield chorismate, which is the branch point compound that serves as the starting substrate for the three terminal pathways of aromatic amino acid biosynthesis. This reaction introduces a second double bond into the aromatic ring system. The polypeptide is Chorismate synthase (Staphylococcus carnosus (strain TM300)).